Reading from the N-terminus, the 273-residue chain is Probable membrane transporter protein YunE (273 aa).

The next 8 helical transmembrane spans lie at 3 to 23 (FVILVVLGLIAGTVGSLIGLG), 50 to 70 (AIGTSLLVIIFTGLSSTLAYI), 81 to 101 (LIFFIGSGPGSMIGAYVSKLF), 105 to 125 (SFSVWFGIFMILISLSLMLKA), 157 to 177 (VGIAIAFVVGFLGGLFGIGGG), 185 to 205 (MLLFLFPPKVAVATSMFIIFL), 222 to 242 (WLYALALVPGAWFGGKLGAAI), and 251 to 271 (IVMIMRIVLILIGCQLIYEGI).

It belongs to the 4-toluene sulfonate uptake permease (TSUP) (TC 2.A.102) family.

It is found in the cell membrane. In Bacillus subtilis (strain 168), this protein is Probable membrane transporter protein YunE (yunE).